The sequence spans 256 residues: MAVGKNKRLSKGKKGLKKRTVDPFSRKDEYSVKAPSTFQIRDVGKTLVNRTTGLKNANDSLKGRIFEVSLADLQNDEDHAFRKVKLRVDEVQGKNCLTNFHGLDFTSDKLRSLVRKWQSLIEANVTVKTTDDYLLRLFAIAFTKRRPNQIKKTTYAGSSQIRAIRKKMTEIIQREAASCTLSQLTTKLIPEVIGREIEKSTQGIYPLQNVHIRKVKLLKSPKFDLGALLNLHGESTTDDQGHKVEREFKETVLESV.

Positions 1 to 18 are enriched in basic residues; sequence MAVGKNKRLSKGKKGLKK. The segment at 1 to 20 is disordered; the sequence is MAVGKNKRLSKGKKGLKKRT. A2 carries the N-acetylalanine; partial modification.

It belongs to the eukaryotic ribosomal protein eS1 family. In terms of assembly, component of the small ribosomal subunit. Mature ribosomes consist of a small (40S) and a large (60S) subunit. The 40S subunit contains about 33 different proteins and 1 molecule of RNA (18S). The 60S subunit contains about 49 different proteins and 3 molecules of RNA (25S, 5.8S and 5S).

It localises to the cytoplasm. This chain is Small ribosomal subunit protein eS1 (rps1), found in Talaromyces marneffei (strain ATCC 18224 / CBS 334.59 / QM 7333) (Penicillium marneffei).